We begin with the raw amino-acid sequence, 635 residues long: Chaperone protein DnaK (635 aa).

Thr-198 bears the Phosphothreonine; by autocatalysis mark. Residues Gln-606–Lys-635 are disordered. Over residues Asp-622–Lys-635 the composition is skewed to acidic residues.

This sequence belongs to the heat shock protein 70 family.

In terms of biological role, acts as a chaperone. The chain is Chaperone protein DnaK from Novosphingobium aromaticivorans (strain ATCC 700278 / DSM 12444 / CCUG 56034 / CIP 105152 / NBRC 16084 / F199).